The primary structure comprises 423 residues: Deferrochelatase (423 aa).

Positions 1–35 form a signal peptide, tat-type signal; that stretch reads MQYEDENGVNEPSRRRLLKGIGALALAGSCPVAHA. Heme b contacts are provided by residues 236 to 238, histidine 329, 334 to 336, and arginine 347; these read GTA and NPR.

This sequence belongs to the DyP-type peroxidase family. EfeB subfamily. Homodimer. Part of a ferrous iron transporter composed of EfeU, EfeO and EfeB. Heme b is required as a cofactor. Predicted to be exported by the Tat system. The position of the signal peptide cleavage has not been experimentally proven.

It localises to the periplasm. It carries out the reaction heme b + 2 H(+) = protoporphyrin IX + Fe(2+). In terms of biological role, involved in the recovery of exogenous heme iron. Extracts iron from heme while preserving the protoporphyrin ring intact. This is Deferrochelatase (efeB) from Escherichia coli O6:K15:H31 (strain 536 / UPEC).